A 209-amino-acid chain; its full sequence is Imidazoleglycerol-phosphate dehydratase (209 aa).

Belongs to the imidazoleglycerol-phosphate dehydratase family.

It localises to the cytoplasm. It carries out the reaction D-erythro-1-(imidazol-4-yl)glycerol 3-phosphate = 3-(imidazol-4-yl)-2-oxopropyl phosphate + H2O. It functions in the pathway amino-acid biosynthesis; L-histidine biosynthesis; L-histidine from 5-phospho-alpha-D-ribose 1-diphosphate: step 6/9. This chain is Imidazoleglycerol-phosphate dehydratase, found in Prochlorococcus marinus (strain MIT 9313).